Reading from the N-terminus, the 432-residue chain is Ribosomal protein uS12 methylthiotransferase RimO (432 aa).

The 112-residue stretch at 1–112 (MKIGVVSLGC…ILNYLGLKEK (112 aa)) folds into the MTTase N-terminal domain. 6 residues coordinate [4Fe-4S] cluster: Cys-10, Cys-46, Cys-75, Cys-134, Cys-138, and Cys-141. The region spanning 120 to 350 (STPRSYAYLK…MAIQRGITRK (231 aa)) is the Radical SAM core domain. Residues 353–422 (EEFLGKEIEV…DYDLAGRDTE (70 aa)) enclose the TRAM domain.

It belongs to the methylthiotransferase family. RimO subfamily. It depends on [4Fe-4S] cluster as a cofactor.

It is found in the cytoplasm. The catalysed reaction is L-aspartate(89)-[ribosomal protein uS12]-hydrogen + (sulfur carrier)-SH + AH2 + 2 S-adenosyl-L-methionine = 3-methylsulfanyl-L-aspartate(89)-[ribosomal protein uS12]-hydrogen + (sulfur carrier)-H + 5'-deoxyadenosine + L-methionine + A + S-adenosyl-L-homocysteine + 2 H(+). Functionally, catalyzes the methylthiolation of an aspartic acid residue of ribosomal protein uS12. This chain is Ribosomal protein uS12 methylthiotransferase RimO, found in Aquifex aeolicus (strain VF5).